Consider the following 546-residue polypeptide: Major facilitator superfamily transporter MPN_077 (546 aa).

12 helical membrane passes run 2–22, 62–82, 88–108, 179–199, 220–240, 248–268, 305–325, 344–364, 377–397, 401–421, 442–462, and 485–505; these read WGLV…IDFI, WTIT…VVKF, VMIM…GSPL, AFFI…IAYA, FWGF…PGVG, VWVV…FAWF, LLAI…QTWF, PILL…LSPF, FIFT…ATLG, VVGF…GWSL, IIFG…DIIT, and IAAI…IIYL.

This sequence belongs to the major facilitator superfamily.

It localises to the cell membrane. This is Major facilitator superfamily transporter MPN_077 from Mycoplasma pneumoniae (strain ATCC 29342 / M129 / Subtype 1) (Mycoplasmoides pneumoniae).